Consider the following 1235-residue polypeptide: Insulin receptor substrate 1 (1235 aa).

S3 carries the post-translational modification Phosphoserine. A mediates interaction with PHIP region spans residues 3 to 133 (SPPDTDGFSD…AGGGCGGSCS (131 aa)). In terms of domain architecture, PH spans 12–115 (DVRKVGYLRK…WYQALLQLHN (104 aa)). A Phosphoserine; by CK2 modification is found at S99. Residues 155–259 (FKEVWQVILK…EAMRAMSDEF (105 aa)) enclose the IRS-type PTB domain. Residues 258-425 (EFRPRTKSQS…SDGGFISSDE (168 aa)) are disordered. Phosphoserine; by RPS6KB1 is present on residues S265 and S302. The span at 265 to 276 (SQSSSSCSNPIS) shows a compositional bias: low complexity. A Phosphoserine; by IKKB, MAPK8 and RPS6KB1 modification is found at S307. A phosphoserine mark is found at S318, S325, S340, and S343. Residues 349 to 358 (THAHRHRGSS) are compositionally biased toward basic residues. Composition is skewed to low complexity over residues 378–399 (SPSA…GSTS) and 407–419 (SSAS…SDGG). A Phosphoserine modification is found at S414. Residues T441 and T448 each carry the phosphothreonine modification. A Phosphotyrosine; by INSR modification is found at Y460. The YXXM motif 1 motif lies at 460–463 (YICM). Phosphothreonine; by CK2 is present on T502. The segment at 520–539 (THSAGTSPTISHQKTPSQSS) is disordered. S522 is modified (phosphoserine; by RPS6KB1). The span at 522 to 539 (SAGTSPTISHQKTPSQSS) shows a compositional bias: polar residues. Short sequence motifs (YXXM motif) lie at residues 546-549 (YTEM) and 608-611 (YMPM). Residue Y608 is modified to Phosphotyrosine; by INSR. Residue S612 is modified to Phosphoserine. Position 628 is a phosphotyrosine; by INSR (Y628). The short motif at 628–631 (YMPM) is the YXXM motif 4 element. Residue S632 is modified to Phosphoserine; by RPS6KB1 and ROCK2. Position 658 is a phosphotyrosine (Y658). The YXXM motif 5 motif lies at 658-661 (YMMM). Residues 669 to 689 (PDIGGGSCSSSSISAAPSGSS) are compositionally biased toward low complexity. The segment at 669-720 (PDIGGGSCSSSSISAAPSGSSYGKPWTNGVGGHHTHALPHAKPPVESGGGKL) is disordered. A YXXM motif 6 motif is present at residues 727 to 730 (YMNM). The tract at residues 766-921 (FKHTQRPGEP…ATSRSSPSVR (156 aa)) is disordered. Residues 771-780 (RPGEPEEGAR) are compositionally biased toward basic and acidic residues. Composition is skewed to low complexity over residues 785-794 (RLSSSSGRLR), 801-810 (DSSSSTSSDS), and 872-881 (QQQQQQQQQQ). At S789 the chain carries Phosphoserine; by AMPK and SIK2. S891 is subject to Phosphoserine. Residues Y895, Y939, and Y987 each carry the phosphotyrosine; by INSR modification. The tract at residues 895–897 (YVN) is GRB2-binding. 3 consecutive short sequence motifs (YXXM motif) follow at residues 939-942 (YMNM), 987-990 (YMTM), and 1010-1013 (YADM). Residues 1024–1165 (LPRTTGAAPP…SAPGCGAAGG (142 aa)) are disordered. The segment covering 1025-1046 (PRTTGAAPPPSSTASASASVTP) has biased composition (low complexity). Residues 1072-1084 (TRVNLSPNHNQSA) are compositionally biased toward polar residues. The residue at position 1099 (S1099) is a Phosphoserine. S1100 carries the phosphoserine; by RPS6KB1 modification. Residues 1101–1114 (ETFSAPTRAANTVS) are compositionally biased toward polar residues. A compositionally biased stretch (gly residues) spans 1118 to 1128 (GAAGGGSGGGS). A Phosphotyrosine; by INSR modification is found at Y1172. Positions 1177–1235 (LVKDVKQHPQDCPSQQQSLPPPPPHQPLGSNEGSSPRRSSEDLSTYASINFQKQPEDRQ) are disordered. A Glycyl lysine isopeptide (Lys-Gly) (interchain with G-Cter in ubiquitin) cross-link involves residue K1179. The span at 1204 to 1229 (LGSNEGSSPRRSSEDLSTYASINFQK) shows a compositional bias: polar residues. Y1222 carries the post-translational modification Phosphotyrosine; by INSR.

As to quaternary structure, interacts with SOCS7. Interacts (via IRS-type PTB domain) with IGF1R and INSR (via the tyrosine-phosphorylated NPXY motif). Interacts with UBTF, FER and PIK3CA. Interacts (via phosphorylated YXXM motifs) with PIK3R1. Interacts with ROCK1. Interacts (via PH domain) with PHIP. Interacts with GRB2. Interacts with ALK. Interacts with EIF2AK2/PKR. Interacts with GKAP1. Interacts with DGKZ in the absence of insulin; insulin stimulation decreases this interaction. Found in a ternary complex with DGKZ and PIP5K1A in the absence of insulin stimulation. Interacts with SQSTM1; the interaction is disrupted by the presence of tensin TNS2. Interacts with NCK1 (via SH2 domain). Interacts with NCK2 (via SH3 domain). Interacts with SH2B1; this interaction enhances leptin-induced activation of the PI3-kinase pathway. Interacts with DVL2; this interaction promotes the Wnt/beta-catenin signaling pathway. Interacts with JAK1. In terms of processing, serine phosphorylation of IRS1 is a mechanism for insulin resistance. Ser-307 phosphorylation inhibits insulin action through disruption of IRS1 interaction with the insulin receptor, and Ser-789 phosphorylation is increased in the liver of insulin-resistant rats. Phosphorylation of Tyr-895 is required for GRB2-binding. Phosphorylated by ALK. Phosphorylated at Ser-265, Ser-302, Ser-632 and Ser-1100 by RPS6KB1; phosphorylation induces accelerated degradation of IRS1. Phosphorylated on tyrosine residues in response to insulin. In skeletal muscles, dephosphorylated on Tyr-608 by TNS2 under anabolic conditions; dephosphorylation results in the proteasomal degradation of IRS1. Post-translationally, ubiquitinated by the Cul7-RING(FBXW8) complex in a mTOR-dependent manner, leading to its degradation: the Cul7-RING(FBXW8) complex recognizes and binds IRS1 previously phosphorylated by S6 kinase (RPS6KB1 or RPS6KB2). Ubiquitinated by TRAF4 through 'Lys-29' linkage; this ubiquitination regulates the interaction of IRS1 with IGFR and IRS1 tyrosine phosphorylation upon IGF1 stimulation. S-nitrosylation at by BLVRB inhibits its activity.

Its subcellular location is the cytoplasm. The protein localises to the nucleus. In terms of biological role, signaling adapter protein that participates in the signal transduction from two prominent receptor tyrosine kinases, insulin receptor/INSR and insulin-like growth factor I receptor/IGF1R. Plays therefore an important role in development, growth, glucose homeostasis as well as lipid metabolism. Upon phosphorylation by the insulin receptor, functions as a signaling scaffold that propagates insulin action through binding to SH2 domain-containing proteins including the p85 regulatory subunit of PI3K, NCK1, NCK2, GRB2 or SHP2. Recruitment of GRB2 leads to the activation of the guanine nucleotide exchange factor SOS1 which in turn triggers the Ras/Raf/MEK/MAPK signaling cascade. Activation of the PI3K/AKT pathway is responsible for most of insulin metabolic effects in the cell, and the Ras/Raf/MEK/MAPK is involved in the regulation of gene expression and in cooperation with the PI3K pathway regulates cell growth and differentiation. Acts a positive regulator of the Wnt/beta-catenin signaling pathway through suppression of DVL2 autophagy-mediated degradation leading to cell proliferation. The polypeptide is Insulin receptor substrate 1 (Irs1) (Rattus norvegicus (Rat)).